A 550-amino-acid chain; its full sequence is Sorting nexin-33 (550 aa).

Residues 1–61 (MALKARALYS…PASYVEIQSS (61 aa)) form the SH3 domain. Positions 62–152 (RSGSVQVDYS…QDSIASGKRG (91 aa)) are disordered. Over residues 86–102 (YDDDDEEDDDDWDDWDD) the composition is skewed to acidic residues. A compositionally biased stretch (basic and acidic residues) spans 128–144 (SRPEYSHRPRPALERQD). Residues 206–316 (FNCSVEEPTK…HFLGCQDEKQ (111 aa)) enclose the PX domain. A BAR domain is found at 347–550 (LQDVEERVDV…EKTLHLYDEL (204 aa)).

This sequence belongs to the sorting nexin family.

Its subcellular location is the cytoplasm. It is found in the cytosol. The protein resides in the membrane. It localises to the cytoplasmic vesicle membrane. In terms of biological role, plays a role in the reorganization of the cytoskeleton, endocytosis and cellular vesicle trafficking, both during interphase and at the end of mitotic cell divisions. Required for efficient progress through mitosis and cytokinesis. Required for normal formation of the cleavage furrow at the end of mitosis. Modulates endocytosis of cell-surface proteins. Promotes membrane tubulation (in vitro). May promote the formation of macropinosomes. In Xenopus laevis (African clawed frog), this protein is Sorting nexin-33 (snx33).